Consider the following 201-residue polypeptide: Dephospho-CoA kinase (201 aa).

One can recognise a DPCK domain in the interval 4–201; the sequence is AFFVTASIAC…VIQEISKGKM (198 aa). 12 to 17 contacts ATP; the sequence is ACGKST.

The protein belongs to the CoaE family.

The protein localises to the cytoplasm. The enzyme catalyses 3'-dephospho-CoA + ATP = ADP + CoA + H(+). It participates in cofactor biosynthesis; coenzyme A biosynthesis; CoA from (R)-pantothenate: step 5/5. Catalyzes the phosphorylation of the 3'-hydroxyl group of dephosphocoenzyme A to form coenzyme A. The chain is Dephospho-CoA kinase from Campylobacter jejuni (strain RM1221).